Reading from the N-terminus, the 129-residue chain is uncharacterized protein (129 aa).

Transmembrane regions (helical) follow at residues 35–55 (IVDG…WKIP) and 98–118 (ILLL…IILL).

The protein resides in the membrane. This is an uncharacterized protein from Saccharomyces cerevisiae (strain ATCC 204508 / S288c) (Baker's yeast).